The primary structure comprises 403 residues: Protein-export membrane protein SecD (403 aa).

A run of 6 helical transmembrane segments spans residues 14 to 34 (VILL…MGIQ), 238 to 258 (FAEG…VILI), 265 to 285 (ILVL…LGAA), 294 to 314 (LAAI…QIII), 336 to 356 (FFII…LAYI), and 365 to 385 (IGLL…GVFI).

Belongs to the SecD/SecF family. SecD subfamily. Part of the protein translocation apparatus. Forms a complex with SecF.

It is found in the cell membrane. Involved in protein export. In Methanothermobacter thermautotrophicus (strain ATCC 29096 / DSM 1053 / JCM 10044 / NBRC 100330 / Delta H) (Methanobacterium thermoautotrophicum), this protein is Protein-export membrane protein SecD.